The sequence spans 298 residues: ATP synthase F(1) complex subunit gamma, mitochondrial (298 aa).

Residues 1–25 (MFSRAGVAGLSAWTVQPQWIQVRNM) constitute a mitochondrion transit peptide. Residue Lys-39 is modified to N6-acetyllysine. Lys-49 is modified (N6-succinyllysine). Position 55 is an N6-acetyllysine (Lys-55). Lys-115 is modified (N6-acetyllysine; alternate). Lys-115 is subject to N6-succinyllysine; alternate. Residue Ser-146 is modified to Phosphoserine. At Lys-154 the chain carries N6-acetyllysine; alternate. The residue at position 154 (Lys-154) is an N6-succinyllysine; alternate. The residue at position 197 (Lys-197) is an N6-acetyllysine. Lys-270 carries the post-translational modification N6-succinyllysine.

The protein belongs to the ATPase gamma chain family. In terms of assembly, component of the ATP synthase complex composed at least of ATP5F1A/subunit alpha, ATP5F1B/subunit beta, ATP5MC1/subunit c (homooctomer), MT-ATP6/subunit a, MT-ATP8/subunit 8, ATP5ME/subunit e, ATP5MF/subunit f, ATP5MG/subunit g, ATP5MK/subunit k, ATP5MJ/subunit j, ATP5F1C/subunit gamma, ATP5F1D/subunit delta, ATP5F1E/subunit epsilon, ATP5PF/subunit F6, ATP5PB/subunit b, ATP5PD/subunit d, ATP5PO/subunit OSCP. ATP synthase complex consists of a soluble F(1) head domain (subunits alpha(3) and beta(3)) - the catalytic core - and a membrane F(0) domain - the membrane proton channel (subunits c, a, 8, e, f, g, k and j). These two domains are linked by a central stalk (subunits gamma, delta, and epsilon) rotating inside the F1 region and a stationary peripheral stalk (subunits F6, b, d, and OSCP). Interacts with FLVCR2; this interaction occurs in the absence of heme and is disrupted upon heme binding.

The protein resides in the mitochondrion inner membrane. Subunit gamma, of the mitochondrial membrane ATP synthase complex (F(1)F(0) ATP synthase or Complex V) that produces ATP from ADP in the presence of a proton gradient across the membrane which is generated by electron transport complexes of the respiratory chain. ATP synthase complex consist of a soluble F(1) head domain - the catalytic core - and a membrane F(1) domain - the membrane proton channel. These two domains are linked by a central stalk rotating inside the F(1) region and a stationary peripheral stalk. During catalysis, ATP synthesis in the catalytic domain of F(1) is coupled via a rotary mechanism of the central stalk subunits to proton translocation. In vivo, can only synthesize ATP although its ATP hydrolase activity can be activated artificially in vitro. With the central stalk subunit delta, is essential for the biogenesis of F(1) catalytic part of the ATP synthase complex namely in the formation of F1 assembly intermediate. The chain is ATP synthase F(1) complex subunit gamma, mitochondrial from Bos taurus (Bovine).